The following is a 1300-amino-acid chain: Nephrocystin-3 (1300 aa).

Residues 82-183 (KNNEVASMQK…LQRLQAQGIQ (102 aa)) adopt a coiled-coil conformation. TPR repeat units follow at residues 443-476 (TMED…ICEL), 916-949 (ADLY…RETA), 958-991 (AQSL…SENA), 1000-1033 (AREL…RQKS), 1066-1099 (ARTL…RERV), 1108-1141 (AQSI…RRRA), 1150-1183 (AYTV…RQKS), 1192-1225 (ATAL…YEDS), and 1234-1267 (GETL…KETE). The disordered stretch occupies residues 1268-1288 (TSVLGAKAPSGHSSSGGDTYS). Polar residues predominate over residues 1278-1288 (GHSSSGGDTYS).

It is found in the cell projection. Its subcellular location is the cilium. Required for normal ciliary development and function. Inhibits disheveled-1-induced canonical Wnt-signaling activity and may also play a role in the control of non-canonical Wnt signaling that regulates planar cell polarity. Probably acts as a molecular switch between different Wnt signaling pathways. Required for proper convergent extension cell movements. This Xenopus laevis (African clawed frog) protein is Nephrocystin-3 (nphp3).